Consider the following 386-residue polypeptide: 1-deoxy-D-xylulose 5-phosphate reductoisomerase (386 aa).

Serine 10, glycine 11, serine 12, valine 13, asparagine 38, and asparagine 120 together coordinate NADPH. Residue lysine 121 coordinates 1-deoxy-D-xylulose 5-phosphate. Glutamate 122 contacts NADPH. Aspartate 146 contacts Mn(2+). Residues serine 147, glutamate 148, serine 172, and histidine 195 each contribute to the 1-deoxy-D-xylulose 5-phosphate site. Glutamate 148 provides a ligand contact to Mn(2+). Glycine 201 lines the NADPH pocket. Residues serine 208, asparagine 213, lysine 214, and glutamate 217 each coordinate 1-deoxy-D-xylulose 5-phosphate. Residue glutamate 217 coordinates Mn(2+).

Belongs to the DXR family. Mg(2+) is required as a cofactor. It depends on Mn(2+) as a cofactor.

The enzyme catalyses 2-C-methyl-D-erythritol 4-phosphate + NADP(+) = 1-deoxy-D-xylulose 5-phosphate + NADPH + H(+). It functions in the pathway isoprenoid biosynthesis; isopentenyl diphosphate biosynthesis via DXP pathway; isopentenyl diphosphate from 1-deoxy-D-xylulose 5-phosphate: step 1/6. Catalyzes the NADPH-dependent rearrangement and reduction of 1-deoxy-D-xylulose-5-phosphate (DXP) to 2-C-methyl-D-erythritol 4-phosphate (MEP). This chain is 1-deoxy-D-xylulose 5-phosphate reductoisomerase, found in Leptospira biflexa serovar Patoc (strain Patoc 1 / Ames).